A 239-amino-acid chain; its full sequence is Pyridoxine 5'-phosphate synthase (239 aa).

A 3-amino-2-oxopropyl phosphate-binding site is contributed by N7. Residue 9-10 (DH) coordinates 1-deoxy-D-xylulose 5-phosphate. Residue R18 participates in 3-amino-2-oxopropyl phosphate binding. The Proton acceptor role is filled by H43. 1-deoxy-D-xylulose 5-phosphate-binding residues include R45 and H50. The active-site Proton acceptor is E70. T100 lines the 1-deoxy-D-xylulose 5-phosphate pocket. H191 (proton donor) is an active-site residue. 3-amino-2-oxopropyl phosphate contacts are provided by residues G192 and 213–214 (GH).

It belongs to the PNP synthase family. In terms of assembly, homooctamer; tetramer of dimers.

Its subcellular location is the cytoplasm. It carries out the reaction 3-amino-2-oxopropyl phosphate + 1-deoxy-D-xylulose 5-phosphate = pyridoxine 5'-phosphate + phosphate + 2 H2O + H(+). The protein operates within cofactor biosynthesis; pyridoxine 5'-phosphate biosynthesis; pyridoxine 5'-phosphate from D-erythrose 4-phosphate: step 5/5. In terms of biological role, catalyzes the complicated ring closure reaction between the two acyclic compounds 1-deoxy-D-xylulose-5-phosphate (DXP) and 3-amino-2-oxopropyl phosphate (1-amino-acetone-3-phosphate or AAP) to form pyridoxine 5'-phosphate (PNP) and inorganic phosphate. This is Pyridoxine 5'-phosphate synthase from Desulforapulum autotrophicum (strain ATCC 43914 / DSM 3382 / VKM B-1955 / HRM2) (Desulfobacterium autotrophicum).